The following is a 658-amino-acid chain: Integrator complex subunit 9 (658 aa).

1D-myo-inositol hexakisphosphate contacts are provided by Lys-2 and Phe-19. Lys-58 is covalently cross-linked (Glycyl lysine isopeptide (Lys-Gly) (interchain with G-Cter in SUMO2)). Positions 510 and 511 each coordinate 1D-myo-inositol hexakisphosphate. Residues 548–574 (DNKHLLQPPPRPAQPTSGKKRKRVSDD) form a disordered region. The Nuclear localization signal motif lies at 566 to 570 (KKRKR).

This sequence belongs to the metallo-beta-lactamase superfamily. RNA-metabolizing metallo-beta-lactamase-like family. INTS9 subfamily. As to quaternary structure, component of the Integrator complex, composed of core subunits INTS1, INTS2, INTS3, INTS4, INTS5, INTS6, INTS7, INTS8, INTS9/RC74, INTS10, INTS11/CPSF3L, INTS12, INTS13, INTS14 and INTS15. The core complex associates with protein phosphatase 2A subunits PPP2CA and PPP2R1A, to form the Integrator-PP2A (INTAC) complex. INTS9 is part of the RNA endonuclease subcomplex, composed of INTS4, INTS9, INTS11 and inositol hexakisphosphate (InsP6). Interacts with WDR73; interaction is required for the assembly of the RNA endonuclease subcomplex in the cytoplasm. Interacts with BRAT1; interaction is required for the assembly of the RNA endonuclease subcomplex. Interacts with ESRRB, ESRRB is not a core component of the Integrator complex and this association is a bridge for the interaction with the multiprotein complex Integrator; attracts the transcriptional machinery.

Its subcellular location is the nucleus. The protein localises to the cytoplasm. Functionally, component of the integrator complex, a multiprotein complex that terminates RNA polymerase II (Pol II) transcription in the promoter-proximal region of genes. The integrator complex provides a quality checkpoint during transcription elongation by driving premature transcription termination of transcripts that are unfavorably configured for transcriptional elongation: the complex terminates transcription by (1) catalyzing dephosphorylation of the C-terminal domain (CTD) of Pol II subunit POLR2A/RPB1 and SUPT5H/SPT5, (2) degrading the exiting nascent RNA transcript via endonuclease activity and (3) promoting the release of Pol II from bound DNA. The integrator complex is also involved in terminating the synthesis of non-coding Pol II transcripts, such as enhancer RNAs (eRNAs), small nuclear RNAs (snRNAs), telomerase RNAs and long non-coding RNAs (lncRNAs). Mediates recruitment of cytoplasmic dynein to the nuclear envelope, probably as component of the integrator complex. This chain is Integrator complex subunit 9, found in Homo sapiens (Human).